Here is a 581-residue protein sequence, read N- to C-terminus: Multidrug and toxin extrusion protein 2 (581 aa).

At 1–33 (MDSLQDTVPLDHGGCCPALSRLVPRGFGTEMWT) the chain is on the cytoplasmic side. The chain crosses the membrane as a helical span at residues 34-54 (LFALSGPLFLFQVLTFMIYIV). Over 55–66 (STVFCGHLGKVE) the chain is Extracellular. Residues 67–87 (LASVTLAVAFVNVCGVSVGVG) form a helical membrane-spanning segment. At 88–119 (LSSACDTLMSQSFGSPNKKHVGVILQRGALVL) the chain is on the cytoplasmic side. The helical transmembrane segment at 120-140 (LLCCLPCWALFLNTQHILLLF) threads the bilayer. The Extracellular segment spans residues 141-153 (RQDPEVSRLTQDY). A helical transmembrane segment spans residues 154–174 (VMIFIPGLPVIFLYNLLAKYL). Topologically, residues 175–183 (QNQKITWPQ) are cytoplasmic. A helical membrane pass occupies residues 184–204 (VLSGVVGNCVNGVANYALVSV). The Extracellular segment spans residues 205–212 (LNLGVRGS). The helical transmembrane segment at 213–233 (AYANIISQFAQTVFLLLYIVL) threads the bilayer. Over 234–253 (KKLHLETWAGWSSQCLQDWG) the chain is Cytoplasmic. The chain crosses the membrane as a helical span at residues 254 to 273 (PFFSLAVPSMLMICVEWWAY). Over 274–317 (EIGSFLMGLLSVVDLSAQAVIYEVATVTYMRHSHHLAYTAHVAR) the chain is Extracellular. Residues 318–338 (IPLGLSIGVCVRVGMALGAAD) traverse the membrane as a helical segment. At 339 to 346 (TVQAKRSA) the chain is on the cytoplasmic side. A helical transmembrane segment spans residues 347–367 (VSGVLSIVGISLVLGTLISIL). Residues 368–380 (KNQLGHIFTNDED) lie on the Extracellular side of the membrane. Residues 381 to 401 (VIALVSQVLPVYSVFHVFEAI) form a helical membrane-spanning segment. Over 402 to 420 (CCVYGGVLRGTGKQAFGAA) the chain is Cytoplasmic. Residues 421-441 (VNAITYYIIGLPLGILLTFVV) traverse the membrane as a helical segment. Residues 442 to 444 (RMR) lie on the Extracellular side of the membrane. Residues 445–465 (IMGLWLGMLACVFLATAAFVA) form a helical membrane-spanning segment. At 466 to 557 (YTARLDWKLA…LSVKQLVIRR (92 aa)) the chain is on the cytoplasmic side. Residues 481–513 (KHSGQQQQQQRAESTATRSGPEKAVLSSVATGS) are disordered. A helical transmembrane segment spans residues 558–578 (GAALGAASATLMVGLTVRILA). The Extracellular segment spans residues 579-581 (TRH).

It belongs to the multi antimicrobial extrusion (MATE) (TC 2.A.66.1) family.

It localises to the cell membrane. Its subcellular location is the apical cell membrane. The enzyme catalyses thiamine(out) + H(+)(in) = thiamine(in) + H(+)(out). The catalysed reaction is estrone 3-sulfate(in) + H(+)(out) = estrone 3-sulfate(out) + H(+)(in). It carries out the reaction creatinine(in) + H(+)(out) = creatinine(out) + H(+)(in). Multidrug efflux pump that functions as a H(+)/organic cation antiporter. Mediates the efflux of cationic compounds, such as the model cations, tetraethylammonium (TEA) and 1-methyl-4-phenylpyridinium (MPP+), the platinum-based drug oxaliplatin or weak bases that are positively charged at physiological pH, cimetidine or the antidiabetic drug metformin. Mediates the efflux of the endogenous compounds creatinine, thiamine and estrone-3-sulfate. Plays a physiological role in the excretion of drugs, toxins and endogenous metabolites through the kidney. The sequence is that of Multidrug and toxin extrusion protein 2 (SLC47A2) from Pongo abelii (Sumatran orangutan).